The following is a 216-amino-acid chain: Octanoyltransferase (216 aa).

The BPL/LPL catalytic domain maps to 35-213 (NSNPDFIWIG…IIQEEFNFDF (179 aa)). Substrate contacts are provided by residues 77–84 (RGGEVTCH), 144–146 (SIG), and 157–159 (GFS). The Acyl-thioester intermediate role is filled by C175.

The protein belongs to the LipB family.

The protein resides in the cytoplasm. The catalysed reaction is octanoyl-[ACP] + L-lysyl-[protein] = N(6)-octanoyl-L-lysyl-[protein] + holo-[ACP] + H(+). It functions in the pathway protein modification; protein lipoylation via endogenous pathway; protein N(6)-(lipoyl)lysine from octanoyl-[acyl-carrier-protein]: step 1/2. Catalyzes the transfer of endogenously produced octanoic acid from octanoyl-acyl-carrier-protein onto the lipoyl domains of lipoate-dependent enzymes. Lipoyl-ACP can also act as a substrate although octanoyl-ACP is likely to be the physiological substrate. This Prochlorococcus marinus (strain MIT 9215) protein is Octanoyltransferase.